A 254-amino-acid polypeptide reads, in one-letter code: Small ribosomal subunit protein uS2 (254 aa).

The span at 228 to 248 shows a compositional bias: basic and acidic residues; that stretch reads RKERKGQDAEEELKKASEPKA. Residues 228 to 254 are disordered; that stretch reads RKERKGQDAEEELKKASEPKAAEAAAE.

Belongs to the universal ribosomal protein uS2 family.

This chain is Small ribosomal subunit protein uS2, found in Nitratidesulfovibrio vulgaris (strain ATCC 29579 / DSM 644 / CCUG 34227 / NCIMB 8303 / VKM B-1760 / Hildenborough) (Desulfovibrio vulgaris).